Here is a 107-residue protein sequence, read N- to C-terminus: uncharacterized protein (107 aa).

Transmembrane regions (helical) follow at residues 5–25 and 42–62; these read WTII…VINV and ILVI…VGIF. The span at 82–92 shows a compositional bias: basic and acidic residues; that stretch reads IHKQEDTHLAD. Positions 82-107 are disordered; that stretch reads IHKQEDTHLADQTDTQDASAMIEKKD.

It is found in the cell membrane. This is an uncharacterized protein from Bacillus subtilis (strain 168).